The chain runs to 314 residues: tRNA-cytidine(32) 2-sulfurtransferase (314 aa).

The short motif at 53–58 is the PP-loop motif element; that stretch reads SGGKDS. Residues Cys-128, Cys-131, and Cys-219 each contribute to the [4Fe-4S] cluster site.

The protein belongs to the TtcA family. As to quaternary structure, homodimer. It depends on Mg(2+) as a cofactor. [4Fe-4S] cluster serves as cofactor.

Its subcellular location is the cytoplasm. It carries out the reaction cytidine(32) in tRNA + S-sulfanyl-L-cysteinyl-[cysteine desulfurase] + AH2 + ATP = 2-thiocytidine(32) in tRNA + L-cysteinyl-[cysteine desulfurase] + A + AMP + diphosphate + H(+). It functions in the pathway tRNA modification. Its function is as follows. Catalyzes the ATP-dependent 2-thiolation of cytidine in position 32 of tRNA, to form 2-thiocytidine (s(2)C32). The sulfur atoms are provided by the cysteine/cysteine desulfurase (IscS) system. The chain is tRNA-cytidine(32) 2-sulfurtransferase from Colwellia psychrerythraea (strain 34H / ATCC BAA-681) (Vibrio psychroerythus).